Reading from the N-terminus, the 110-residue chain is Cell cycle protein GpsB (110 aa).

Residues 37–63 are a coiled coil; that stretch reads KDYTVYIALVKELQEENAKLKAKATSA. Residues 59-79 form a disordered region; sequence KATSAPASRPAYASATSEPSH. The segment covering 60-75 has biased composition (low complexity); that stretch reads ATSAPASRPAYASATS.

This sequence belongs to the GpsB family. As to quaternary structure, forms polymers through the coiled coil domains. Interacts with PBP1, MreC and EzrA.

It localises to the cytoplasm. Divisome component that associates with the complex late in its assembly, after the Z-ring is formed, and is dependent on DivIC and PBP2B for its recruitment to the divisome. Together with EzrA, is a key component of the system that regulates PBP1 localization during cell cycle progression. Its main role could be the removal of PBP1 from the cell pole after pole maturation is completed. Also contributes to the recruitment of PBP1 to the division complex. Not essential for septum formation. This is Cell cycle protein GpsB from Streptococcus thermophilus (strain CNRZ 1066).